The primary structure comprises 867 residues: Glutamate receptor 1.2 (867 aa).

Positions 1-27 (MVRICIQTPILLSFLLVLLFFISNCFA) are cleaved as a signal peptide. At 28 to 560 (SSQNNDDDKR…SMWVFFQPLT (533 aa)) the chain is on the extracellular side. Residues Asn-301, Asn-400, Asn-496, and Asn-499 are each glycosylated (N-linked (GlcNAc...) asparagine). The helical transmembrane segment at 561-581 (PNLWITSAAFFVLTGIIVWLI) threads the bilayer. Residues 582–590 (ERAENKEFQ) are Cytoplasmic-facing. The helical transmembrane segment at 591-611 (GSWPQQIGVVIWFGFSTLVYA) threads the bilayer. The Cytoplasmic portion of the chain corresponds to 612-622 (HREKLQHNLSR). A helical membrane pass occupies residues 623–643 (FVVTVWVFAVLILVTSYTATL). Topologically, residues 644–792 (TSMMTVQQIR…NPITLYRFRG (149 aa)) are extracellular. 4 N-linked (GlcNAc...) asparagine glycosylation sites follow: Asn-676, Asn-688, Asn-699, and Asn-748. Residues 793–813 (LFMITGVSFAFALAVLLILWL) form a helical membrane-spanning segment. Over 814-867 (RERWEILVNSVNIYFSQRLRHFRILFTRTIHPSPLGLDNPIGENAVQMAQRNRR) the chain is Cytoplasmic.

The protein belongs to the glutamate-gated ion channel (TC 1.A.10.1) family. In terms of assembly, may form heteromers. Expressed predominantly in roots and siliques.

The protein resides in the membrane. In terms of biological role, glutamate-gated receptor that probably acts as a non-selective cation channel. May be involved in light-signal transduction and calcium homeostasis via the regulation of calcium influx into cells. The sequence is that of Glutamate receptor 1.2 (GLR1.2) from Arabidopsis thaliana (Mouse-ear cress).